The primary structure comprises 142 residues: Large ribosomal subunit protein uL11 (142 aa).

The protein belongs to the universal ribosomal protein uL11 family. In terms of assembly, part of the ribosomal stalk of the 50S ribosomal subunit. Interacts with L10 and the large rRNA to form the base of the stalk. L10 forms an elongated spine to which L12 dimers bind in a sequential fashion forming a multimeric L10(L12)X complex. One or more lysine residues are methylated.

Its function is as follows. Forms part of the ribosomal stalk which helps the ribosome interact with GTP-bound translation factors. This is Large ribosomal subunit protein uL11 from Mycobacterium tuberculosis (strain ATCC 25177 / H37Ra).